The sequence spans 241 residues: Tumor necrosis factor receptor superfamily member grnd (241 aa).

The N-terminal stretch at 1 to 27 (MSVRKLSALSLSIGGVPLIPSVSLVAA) is a signal peptide. At 28 to 98 (ANGESRDCHG…EMLDIQNTQQ (71 aa)) the chain is on the extracellular side. Intrachain disulfides connect Cys-35–Cys-47, Cys-40–Cys-54, Cys-57–Cys-77, and Cys-61–Cys-73. N-linked (GlcNAc...) asparagine glycosylation is present at Asn-63. The helical transmembrane segment at 99–119 (LILLLLTILLVLIALRCAFQF) threads the bilayer. At 120-241 (LRWLIGNRCF…PSAATIPVAF (122 aa)) the chain is on the cytoplasmic side.

Interacts (via extracellular cysteine-rich domain) with egr (via secreted TNF-homology soluble form); forms heterohexamers when 3 copies associate with egr trimers. Interacts with Traf6/TRAF2 and veli (via PDZ domain). In terms of processing, N-glycosylated on Asn-63. Glycosylation regulates ligand binding, specifically reducing affinity for the TNF egr, thereby inhibiting activation of JNK signaling. Expressed in the adult midgut; under normal conditions expressed at lower levels than the other TNF receptor wgn.

Its subcellular location is the apical cell membrane. It is found in the cytoplasmic vesicle membrane. Acts as a receptor for TNF-cytokine egr. Plays a role in activation of JNK signaling and is required for egr-induced apoptosis, including in wing imaginal discs during development. May also play an egr-independent role in cell proliferation. TNF receptor involved in triggering JNK-dependent proliferation of the enteroblast-enterocyte lineage in response to stress-induced release of egr by intestinal stem cells and enteroblasts. Involved in regulation of insulin production in response to dietary protein shortage keeping systemic growth in check. Activation in brain insulin producing cells through binding of egr released into the hemolymph in response to dietary amino acid shortage, results in JNK-dependent inhibition of insulin production. This chain is Tumor necrosis factor receptor superfamily member grnd, found in Drosophila melanogaster (Fruit fly).